We begin with the raw amino-acid sequence, 175 residues long: Large ribosomal subunit protein bL9 (175 aa).

It belongs to the bacterial ribosomal protein bL9 family.

Functionally, binds to the 23S rRNA. The polypeptide is Large ribosomal subunit protein bL9 (Orientia tsutsugamushi (strain Boryong) (Rickettsia tsutsugamushi)).